Reading from the N-terminus, the 323-residue chain is Methenyltetrahydromethanopterin cyclohydrolase (323 aa).

It belongs to the MCH family.

It localises to the cytoplasm. It carries out the reaction 5,10-methenyl-5,6,7,8-tetrahydromethanopterin + H2O = N(5)-formyl-5,6,7,8-tetrahydromethanopterin + H(+). Its pathway is one-carbon metabolism; methanogenesis from CO(2); 5,10-methenyl-5,6,7,8-tetrahydromethanopterin from CO(2): step 3/3. Catalyzes the reversible interconversion of 5-formyl-H(4)MPT to methenyl-H(4)MPT(+). The polypeptide is Methenyltetrahydromethanopterin cyclohydrolase (Methanococcus vannielii (strain ATCC 35089 / DSM 1224 / JCM 13029 / OCM 148 / SB)).